Consider the following 431-residue polypeptide: MFKTISNFMRVSDIRNKIIFTLLMLIVFRIGAFIPVPYVNAEALQAQSQMGVFDLLNTFGGGALYQFSIFAMGITPYITASIIIQLLQMDVVPKFTEWSKQGEVGRRKLAQFTRYFTIVLGFIQALGMSYGFNNLANGMLIEKSGVSTYLIIALVLTGGTAFLMWLGEQITSHGVGNGISIIIFAGIVSSIPKTIGQIYETQFVGSNDQLFIHIVKVALLVIAILAVIVGVIFIQQAVRKIAIQYAKGTGRSPAGGGQSTHLPLKVNPAGVIPVIFAVAFLITPRTIASFFGTNDVTKWIQNNFDNTHPVGMAIYVALIIAFTYFYAFVQVNPEQMADNLKKQGGYIPGVRPGKMTQDRITSILYRLTFVGSIFLAVISILPIFFIQFAGLPQSAQIGGTSLLIVVGVALETMKQLESQLVKRNYRGFMKN.

Over 1–17 (MFKTISNFMRVSDIRNK) the chain is Cytoplasmic. Residues 18–38 (IIFTLLMLIVFRIGAFIPVPY) form a helical membrane-spanning segment. Over 39–66 (VNAEALQAQSQMGVFDLLNTFGGGALYQ) the chain is Extracellular. Residues 67–87 (FSIFAMGITPYITASIIIQLL) form a helical membrane-spanning segment. The Cytoplasmic segment spans residues 88-115 (QMDVVPKFTEWSKQGEVGRRKLAQFTRY). The chain crosses the membrane as a helical span at residues 116–136 (FTIVLGFIQALGMSYGFNNLA). The Extracellular portion of the chain corresponds to 137–145 (NGMLIEKSG). The helical transmembrane segment at 146–166 (VSTYLIIALVLTGGTAFLMWL) threads the bilayer. The Cytoplasmic portion of the chain corresponds to 167–177 (GEQITSHGVGN). A helical membrane pass occupies residues 178–198 (GISIIIFAGIVSSIPKTIGQI). Residues 199 to 213 (YETQFVGSNDQLFIH) are Extracellular-facing. Residues 214–234 (IVKVALLVIAILAVIVGVIFI) form a helical membrane-spanning segment. The Cytoplasmic segment spans residues 235-261 (QQAVRKIAIQYAKGTGRSPAGGGQSTH). Residues 262–282 (LPLKVNPAGVIPVIFAVAFLI) form a helical membrane-spanning segment. Residues 283-308 (TPRTIASFFGTNDVTKWIQNNFDNTH) lie on the Extracellular side of the membrane. A helical transmembrane segment spans residues 309–329 (PVGMAIYVALIIAFTYFYAFV). Topologically, residues 330 to 368 (QVNPEQMADNLKKQGGYIPGVRPGKMTQDRITSILYRLT) are cytoplasmic. The next 2 membrane-spanning stretches (helical) occupy residues 369–389 (FVGS…IQFA) and 390–410 (GLPQ…GVAL). At 411–431 (ETMKQLESQLVKRNYRGFMKN) the chain is on the cytoplasmic side.

It belongs to the SecY/SEC61-alpha family. As to quaternary structure, component of the Sec protein translocase complex. Heterotrimer consisting of SecY, SecE and SecG subunits. The heterotrimers can form oligomers, although 1 heterotrimer is thought to be able to translocate proteins. Interacts with the ribosome. Interacts with SecDF, and other proteins may be involved. Interacts with SecA. Interacts with FloT.

The protein localises to the cell membrane. It localises to the membrane raft. The central subunit of the protein translocation channel SecYEG. Consists of two halves formed by TMs 1-5 and 6-10. These two domains form a lateral gate at the front which open onto the bilayer between TMs 2 and 7, and are clamped together by SecE at the back. The channel is closed by both a pore ring composed of hydrophobic SecY resides and a short helix (helix 2A) on the extracellular side of the membrane which forms a plug. The plug probably moves laterally to allow the channel to open. The ring and the pore may move independently. The sequence is that of Protein translocase subunit SecY from Bacillus subtilis (strain 168).